We begin with the raw amino-acid sequence, 53 residues long: MLRYALIFFVIAIIAAVFGFGGIAAGAAEIAKILFYIFVVIFLVTLLLGVVRR.

A run of 2 helical transmembrane segments spans residues 5-25 and 30-50; these read ALIF…GIAA and IAKI…LLGV.

It belongs to the UPF0391 family.

The protein resides in the cell membrane. This chain is UPF0391 membrane protein Bmul_5473/BMULJ_06024, found in Burkholderia multivorans (strain ATCC 17616 / 249).